The primary structure comprises 182 residues: Large ribosomal subunit protein bL17 (182 aa).

The disordered stretch occupies residues Glu-126 to Lys-182. Residues Lys-137 to Glu-149 show a composition bias toward basic and acidic residues. 2 stretches are compositionally biased toward acidic residues: residues Glu-150 to Thr-161 and Glu-170 to Lys-182.

This sequence belongs to the bacterial ribosomal protein bL17 family. Part of the 50S ribosomal subunit. Contacts protein L32.

The chain is Large ribosomal subunit protein bL17 from Corynebacterium jeikeium (strain K411).